The following is a 1282-amino-acid chain: Myosin-1 (1282 aa).

The tract at residues 1-30 is disordered; sequence MAISKKAGAKKAGAVSKPPPSKGASSKGGV. The 680-residue stretch at 44–723 folds into the Myosin motor domain; the sequence is AGVSDMTLLS…TLFALETMRD (680 aa). 137–144 contacts ATP; the sequence is GESGAGKT. Ser365 is modified (phosphoserine). Residues 412-494 form an actin-binding region; it reads VIGVLDIYGF…PGIFSALNDA (83 aa). A disordered region spans residues 569–590; that stretch reads LQKLFPDRPDPNSKKRPPTAGD. 2 consecutive IQ domains span residues 727–747 and 748–773; these read HNMAMRIQRAYRNYLRYKEEC and ARRIQRMWKNNKEGLQYIQLRDYGHQ. Residues 781-977 enclose the TH1 domain; the sequence is RRRFSLLGLR…AVSVCSGEPA (197 aa). Residues 973 to 1073 form a disordered region; it reads SGEPANSVSR…PPPAAVAPSE (101 aa). Positions 1029–1058 are enriched in low complexity; that stretch reads PGSGAAGTARPAAAVGSASAGAGVGATRSA. Residues 1059–1068 show a composition bias toward pro residues; sequence PRPPPPPPAA. Residues 1074-1135 form the SH3 domain; that stretch reads PQVARYKALY…PSNYLELIVQ (62 aa). The disordered stretch occupies residues 1237 to 1282; sequence AAAAAAGAGANGKGAGAPPAVAAKPVVAPKPAGSNGRAMPPPPPRR. A compositionally biased stretch (low complexity) spans 1252 to 1269; sequence GAPPAVAAKPVVAPKPAG.

This sequence belongs to the TRAFAC class myosin-kinesin ATPase superfamily. Myosin family. Phosphorylation of the TEDS site (Ser-365) is required for the polarization of the actin cytoskeleton. Phosphorylation probably activates the myosin-I ATPase activity.

The protein localises to the cytoplasm. Its subcellular location is the cytoskeleton. The protein resides in the actin patch. Its function is as follows. Type-I myosin implicated in the organization of the actin cytoskeleton. Required for proper actin cytoskeleton polarization. At the cell cortex, assembles in patch-like structures together with proteins from the actin-polymerizing machinery and promotes actin assembly. Functions as actin nucleation-promoting factor (NPF) for the Arp2/3 complex. This Mycosarcoma maydis (Corn smut fungus) protein is Myosin-1 (myo1).